The chain runs to 207 residues: Thymidylate kinase (207 aa).

Residue 7 to 14 (GPEGAGKS) participates in ATP binding.

The protein belongs to the thymidylate kinase family.

It catalyses the reaction dTMP + ATP = dTDP + ADP. Functionally, phosphorylation of dTMP to form dTDP in both de novo and salvage pathways of dTTP synthesis. This is Thymidylate kinase from Pseudomonas putida (strain W619).